The following is a 198-amino-acid chain: T-cell surface glycoprotein CD3 epsilon chain (198 aa).

The first 21 residues, 1–21 (MRAGTLWRVLALWLLSVAAWG), serve as a signal peptide directing secretion. Topologically, residues 22–120 (QEDDDHADDY…EACMEVDLTT (99 aa)) are extracellular. In terms of domain architecture, Ig-like spans 28–106 (ADDYTQKLFT…KENEHILYLK (79 aa)). A disulfide bridge links Cys-49 with Cys-90. Residues 121–141 (VASIVVADVCVTLGLLLLVYY) traverse the membrane as a helical segment. Over 142 to 198 (WSKNRKAKCKPVTRGAGAGGRPRGQNKERPPPVPNPDYEPIRKGQRDLYSGLNQRGI) the chain is Cytoplasmic. The interval 153-198 (VTRGAGAGGRPRGQNKERPPPVPNPDYEPIRKGQRDLYSGLNQRGI) is disordered. The tract at residues 166–183 (QNKERPPPVPNPDYEPIR) is NUMB-binding region. The ITAM domain maps to 169–196 (ERPPPVPNPDYEPIRKGQRDLYSGLNQR). Positions 170–177 (RPPPVPNP) are proline-rich sequence. Phosphotyrosine is present on residues Tyr-179 and Tyr-190.

In terms of assembly, the TCR-CD3 complex is composed of a CD3D/CD3E and a CD3G/CD3E heterodimers that preferentially associate with TCRalpha and TCRbeta, respectively, to form TCRalpha/CD3E/CD3G and TCRbeta/CD3G/CD3E trimers. In turn, the hexamer interacts with CD3Z homodimer to form the TCR-CD3 complex. Alternatively, TCRalpha and TCRbeta can be replaced by TCRgamma and TCRdelta. Interacts with CD6. Interacts (via Proline-rich sequence) with NCK1; the interaction is ligand dependent but independent of tyrosine kinase activation. Phosphorylated on Tyr residues after T-cell receptor triggering by LCK in association with CD4/CD8.

It is found in the cell membrane. Part of the TCR-CD3 complex present on T-lymphocyte cell surface that plays an essential role in adaptive immune response. When antigen presenting cells (APCs) activate T-cell receptor (TCR), TCR-mediated signals are transmitted across the cell membrane by the CD3 chains CD3D, CD3E, CD3G and CD3Z. All CD3 chains contain immunoreceptor tyrosine-based activation motifs (ITAMs) in their cytoplasmic domain. Upon TCR engagement, these motifs become phosphorylated by Src family protein tyrosine kinases LCK and FYN, resulting in the activation of downstream signaling pathways. In addition of this role of signal transduction in T-cell activation, CD3E plays an essential role in correct T-cell development. Also participates in internalization and cell surface down-regulation of TCR-CD3 complexes via endocytosis sequences present in CD3E cytosolic region. In addition to its role as a TCR coreceptor, it serves as a receptor for ITPRIPL1. Ligand recognition inhibits T-cell activation by promoting interaction with NCK1, which prevents CD3E-ZAP70 interaction and blocks the ERK-NFkB signaling cascade and calcium influx. This is T-cell surface glycoprotein CD3 epsilon chain (CD3E) from Oryctolagus cuniculus (Rabbit).